Here is a 64-residue protein sequence, read N- to C-terminus: Large ribosomal subunit protein bL35 (64 aa).

Belongs to the bacterial ribosomal protein bL35 family.

The protein is Large ribosomal subunit protein bL35 of Shewanella baltica (strain OS223).